Consider the following 83-residue polypeptide: Cytochrome c oxidase subunit 7A2, mitochondrial (83 aa).

The N-terminal 23 residues, 1–23 (MLRNLLALRQIGQRTISTASRRH), are a transit peptide targeting the mitochondrion. Over 24-48 (FKNKVPEKQKLFQEDDEIPLYLKGG) the chain is Mitochondrial matrix. Lys33 bears the N6-acetyllysine mark. Residues 49 to 77 (VADALLYRATMILTVGGTAYAIYELAVAS) form a helical membrane-spanning segment. Topologically, residues 78-83 (FPKKQE) are mitochondrial intermembrane.

Belongs to the cytochrome c oxidase VIIa family. Component of the cytochrome c oxidase (complex IV, CIV), a multisubunit enzyme composed of 14 subunits. The complex is composed of a catalytic core of 3 subunits MT-CO1, MT-CO2 and MT-CO3, encoded in the mitochondrial DNA, and 11 supernumerary subunits COX4I1 (or COX4I2), COX5A, COX5B, COX6A1 (or COX6A2), COX6B1 (or COX6B2), COX6C, COX7A2 (or COX7A1), COX7B, COX7C, COX8A and NDUFA4, which are encoded in the nuclear genome. The complex exists as a monomer or a dimer and forms supercomplexes (SCs) in the inner mitochondrial membrane with NADH-ubiquinone oxidoreductase (complex I, CI) and ubiquinol-cytochrome c oxidoreductase (cytochrome b-c1 complex, complex III, CIII), resulting in different assemblies (supercomplex SCI(1)III(2)IV(1) and megacomplex MCI(2)III(2)IV(2)). Interacts with PET100.

It is found in the mitochondrion inner membrane. The protein operates within energy metabolism; oxidative phosphorylation. Functionally, component of the cytochrome c oxidase, the last enzyme in the mitochondrial electron transport chain which drives oxidative phosphorylation. The respiratory chain contains 3 multisubunit complexes succinate dehydrogenase (complex II, CII), ubiquinol-cytochrome c oxidoreductase (cytochrome b-c1 complex, complex III, CIII) and cytochrome c oxidase (complex IV, CIV), that cooperate to transfer electrons derived from NADH and succinate to molecular oxygen, creating an electrochemical gradient over the inner membrane that drives transmembrane transport and the ATP synthase. Cytochrome c oxidase is the component of the respiratory chain that catalyzes the reduction of oxygen to water. Electrons originating from reduced cytochrome c in the intermembrane space (IMS) are transferred via the dinuclear copper A center (CU(A)) of subunit 2 and heme A of subunit 1 to the active site in subunit 1, a binuclear center (BNC) formed by heme A3 and copper B (CU(B)). The BNC reduces molecular oxygen to 2 water molecules using 4 electrons from cytochrome c in the IMS and 4 protons from the mitochondrial matrix. The polypeptide is Cytochrome c oxidase subunit 7A2, mitochondrial (COX7A2) (Homo sapiens (Human)).